An 805-amino-acid chain; its full sequence is Mitochondrial intermediate peptidase (805 aa).

A mitochondrion-targeting transit peptide spans 1–25; the sequence is MIQPLVKASRPRLWVCSDCLLRRTL. His-578 serves as a coordination point for Zn(2+). Glu-579 is a catalytic residue. Residues His-582 and His-585 each contribute to the Zn(2+) site.

The protein belongs to the peptidase M3 family. Zn(2+) is required as a cofactor.

It localises to the mitochondrion matrix. The enzyme catalyses Release of an N-terminal octapeptide as second stage of processing of some proteins imported into the mitochondrion.. Functionally, cleaves proteins, imported into the mitochondrion, to their mature size. While most mitochondrial precursor proteins are processed to the mature form in one step by mitochondrial processing peptidase (MPP), the sequential cleavage by MIP of an octapeptide after initial processing by MPP is a required step for a subgroup of nuclear-encoded precursor proteins destined for the matrix or the inner membrane. The protein is Mitochondrial intermediate peptidase (oct-1) of Neurospora crassa (strain ATCC 24698 / 74-OR23-1A / CBS 708.71 / DSM 1257 / FGSC 987).